Here is a 291-residue protein sequence, read N- to C-terminus: ATP synthase gamma chain (291 aa).

This sequence belongs to the ATPase gamma chain family. In terms of assembly, F-type ATPases have 2 components, CF(1) - the catalytic core - and CF(0) - the membrane proton channel. CF(1) has five subunits: alpha(3), beta(3), gamma(1), delta(1), epsilon(1). CF(0) has three main subunits: a, b and c.

The protein resides in the cell inner membrane. In terms of biological role, produces ATP from ADP in the presence of a proton gradient across the membrane. The gamma chain is believed to be important in regulating ATPase activity and the flow of protons through the CF(0) complex. This is ATP synthase gamma chain from Pelodictyon phaeoclathratiforme (strain DSM 5477 / BU-1).